A 241-amino-acid chain; its full sequence is Phosphoribosylaminoimidazole-succinocarboxamide synthase (241 aa).

The protein belongs to the SAICAR synthetase family.

It carries out the reaction 5-amino-1-(5-phospho-D-ribosyl)imidazole-4-carboxylate + L-aspartate + ATP = (2S)-2-[5-amino-1-(5-phospho-beta-D-ribosyl)imidazole-4-carboxamido]succinate + ADP + phosphate + 2 H(+). The protein operates within purine metabolism; IMP biosynthesis via de novo pathway; 5-amino-1-(5-phospho-D-ribosyl)imidazole-4-carboxamide from 5-amino-1-(5-phospho-D-ribosyl)imidazole-4-carboxylate: step 1/2. The protein is Phosphoribosylaminoimidazole-succinocarboxamide synthase of Lacticaseibacillus paracasei (strain ATCC 334 / BCRC 17002 / CCUG 31169 / CIP 107868 / KCTC 3260 / NRRL B-441) (Lactobacillus paracasei).